Consider the following 142-residue polypeptide: Large ribosomal subunit protein uL11 (142 aa).

Belongs to the universal ribosomal protein uL11 family. Part of the ribosomal stalk of the 50S ribosomal subunit. Interacts with L10 and the large rRNA to form the base of the stalk. L10 forms an elongated spine to which L12 dimers bind in a sequential fashion forming a multimeric L10(L12)X complex. In terms of processing, one or more lysine residues are methylated.

Functionally, forms part of the ribosomal stalk which helps the ribosome interact with GTP-bound translation factors. This chain is Large ribosomal subunit protein uL11, found in Maricaulis maris (strain MCS10) (Caulobacter maris).